Consider the following 261-residue polypeptide: tRNA (guanine-N(1)-)-methyltransferase (261 aa).

Residues glycine 113 and 133-138 (IGDYVL) each bind S-adenosyl-L-methionine.

It belongs to the RNA methyltransferase TrmD family. In terms of assembly, homodimer.

It localises to the cytoplasm. It catalyses the reaction guanosine(37) in tRNA + S-adenosyl-L-methionine = N(1)-methylguanosine(37) in tRNA + S-adenosyl-L-homocysteine + H(+). Functionally, specifically methylates guanosine-37 in various tRNAs. The polypeptide is tRNA (guanine-N(1)-)-methyltransferase (Xylella fastidiosa (strain M23)).